Here is a 426-residue protein sequence, read N- to C-terminus: MKYLIKAKIEVEGLVDRHDIIGAIFGQTENLFGEEFDLRKLQDRGRIGRVQVDIKHEGTRTIGEVVVPSNLDRVETALVAAMLESVEKVGPYKAQIRVYDIVDVRAQKIKRIVERAKEILRIWSLEKTPDLREVLREISEAVKRAEVIEYGPERLPAGPDVDKSDEIIIVEGRADVINLLRYGYRNVIALEGARGKIPETIIKLAKTKKAIAFVDGDHGGDLILWELLKVADIDYVAKAPPGKEVEELTGKEIARALRNLIPAREYLQILERKFKPKPAVEERPQPPQPQPPAVQPVQPTLQPTVTTVEVVREAKPEKPTVQVEVETFEIPPSVIEEVKKLSGTLEAVLYDSKWNPIERVSVRDVYNVLEKMEPGKVYAVAYDGIVTQRMLDIAAEKQVRLLIANRIGNIEKRPPKVGILTFSDLT.

In terms of domain architecture, Toprim spans 165–241; that stretch reads DEIIIVEGRA…DIDYVAKAPP (77 aa). The Mg(2+) site is built by Glu-171, Asp-215, and Asp-217. The tract at residues 278–298 is disordered; it reads PAVEERPQPPQPQPPAVQPVQ. Residues 285 to 294 are compositionally biased toward pro residues; the sequence is QPPQPQPPAV.

Belongs to the archaeal DnaG primase family. As to quaternary structure, forms a ternary complex with MCM helicase and DNA. Component of the archaeal exosome complex. Requires Mg(2+) as cofactor.

It catalyses the reaction ssDNA + n NTP = ssDNA/pppN(pN)n-1 hybrid + (n-1) diphosphate.. RNA polymerase that catalyzes the synthesis of short RNA molecules used as primers for DNA polymerase during DNA replication. Also part of the exosome, which is a complex involved in RNA degradation. Acts as a poly(A)-binding protein that enhances the interaction between heteromeric, adenine-rich transcripts and the exosome. The sequence is that of DNA primase DnaG from Hyperthermus butylicus (strain DSM 5456 / JCM 9403 / PLM1-5).